Here is a 400-residue protein sequence, read N- to C-terminus: Telomere repeat-binding protein 6 (400 aa).

The region spanning 173-252 (VKFGIKSLNI…DDENLGSLGF (80 aa)) is the Ubiquitin-like domain. Positions 310 to 369 (VQRRIRRPFTVSEVEALVQAVERLGTGRWRDVKSHAFNHVNHRTYVDLKDKWKTLVHTAK) constitute an HTH myb-type domain. The H-T-H motif DNA-binding region spans 338-365 (WRDVKSHAFNHVNHRTYVDLKDKWKTLV).

Homodimer. As to expression, expressed ubiquitously.

Its subcellular location is the nucleus. In terms of biological role, binds specifically to the plant telomeric double-stranded DNA sequences. At least 4 repeats of telomeric sequences are required for binding. This Arabidopsis thaliana (Mouse-ear cress) protein is Telomere repeat-binding protein 6 (TRP6).